Here is an 84-residue protein sequence, read N- to C-terminus: Figainin 2 (84 aa).

The signal sequence occupies residues 1–22 (MAFLKKSLFLVLFLGIVSLSVC). Over residues 23-39 (EEEKREGEEKEEKREEE) the composition is skewed to basic and acidic residues. The tract at residues 23–53 (EEEKREGEEKEEKREEEEGKEENEDGNEEHK) is disordered. A propeptide spanning residues 23-54 (EEEKREGEEKEEKREEEEGKEENEDGNEEHKE) is cleaved from the precursor. Over residues 40–49 (EGKEENEDGN) the composition is skewed to acidic residues.

Expressed by the skin glands.

The protein localises to the secreted. In terms of biological role, antimicrobial peptide that displays antibacterial, antiprotozoal, and antiviral activity. Exhibits antibacterial activity against the Gram-positive bacteria S.epidermidis ATCC 12228 (MIC=4 uM), E.casseliflavus ATCC 700327 (MIC=4 uM), S.aureus ATCC 25923 (MIC=8 uM) and E.faecalis ATCC 29212 (MIC=8 uM), and the Gram-negative bacteria E.coli ATCC 25922 (MIC=8 uM), K.pneumoniae ATCC 13883 (MIC=8 uM), the multi-resistant clinical isolate strain K.pneumoniae carbapanemase (KPC) MR (MIC=16 uM), and P.aeruginosa ATCC 27853 (MIC=32 uM). Displays antiprotozoal activity against the epimastigote form of T.cruzi (IC(50)=6.32 uM). Does not show antimicrobial against the fungi C.albicans ATCC 90028 and C.parapsilosis ATCC 22019. Displays antiviral activity against the human viruses chikungunya (EC(50)=17.9 uM), Dengue serotype 4 (EC(50)=20.8 uM) and Yellow Fever (EC(50)=21.8 uM). Shows moderate cytolytic activity against human erythrocytes (HC(50)=48.9 uM), and activates the oxidative burst in human neutrophils. Also displays anti-proliferative effects against MCF-7 breast cancer cells (IC(50)=15.3 uM) and B16F10 murine melanoma cells (IC(50)=12.8 uM). The protein is Figainin 2 of Boana raniceps (Chaco tree frog).